The following is a 338-amino-acid chain: Fructose-1,6-bisphosphatase class 1 (338 aa).

E91, D113, L115, and D116 together coordinate Mg(2+). Substrate-binding positions include 116–119 (DGSS), N211, Y244, and K277. Position 283 (E283) interacts with Mg(2+).

It belongs to the FBPase class 1 family. As to quaternary structure, homotetramer. The cofactor is Mg(2+).

The protein localises to the cytoplasm. The catalysed reaction is beta-D-fructose 1,6-bisphosphate + H2O = beta-D-fructose 6-phosphate + phosphate. It functions in the pathway carbohydrate biosynthesis; gluconeogenesis. The chain is Fructose-1,6-bisphosphatase class 1 from Oleidesulfovibrio alaskensis (strain ATCC BAA-1058 / DSM 17464 / G20) (Desulfovibrio alaskensis).